We begin with the raw amino-acid sequence, 82 residues long: Delta-actitoxin-Aeq2a (82 aa).

The N-terminal stretch at 1–19 (MNRLMILVFAAVFLALASA) is a signal peptide. A propeptide spanning residues 20-26 (DEDVDIA) is cleaved from the precursor. Disulfide bonds link Cys-32–Cys-79, Cys-34–Cys-69, and Cys-62–Cys-80.

Belongs to the sea anemone sodium channel inhibitory toxin family. Type I subfamily.

It is found in the secreted. Its subcellular location is the nematocyst. Its function is as follows. Binds specifically to voltage-gated sodium channels (Nav), thereby delaying their inactivation during signal transduction. Causes death to crabs (minimum lethal dose of 25 ug/kg) and mice. The sequence is that of Delta-actitoxin-Aeq2a from Actinia equina (Beadlet anemone).